A 168-amino-acid polypeptide reads, in one-letter code: Protein archease (168 aa).

Position 2 is an N-acetylalanine (Ala-2). Positions 39, 167, and 168 each coordinate Ca(2+).

Belongs to the archease family. Component of the tRNA-splicing ligase complex.

Its function is as follows. Component of the tRNA-splicing ligase complex required to facilitate the enzymatic turnover of catalytic subunit RTCB. Together with DDX1, acts by facilitating the guanylylation of RTCB, a key intermediate step in tRNA ligation. This Mus musculus (Mouse) protein is Protein archease (Zbtb8os).